The sequence spans 103 residues: Cell division protein FtsB (103 aa).

Residues 1-3 (MGK) are Cytoplasmic-facing. The chain crosses the membrane as a helical span at residues 4 to 21 (LTLLLLALLVWLQYSLWF). Residues 22-103 (GKNGIHDYSR…RAGGPAQNNR (82 aa)) lie on the Periplasmic side of the membrane. The stretch at 38-62 (VQQATNAKLKARNDQLFAEIDDLNG) forms a coiled coil.

The protein belongs to the FtsB family. As to quaternary structure, part of a complex composed of FtsB, FtsL and FtsQ.

Its subcellular location is the cell inner membrane. Essential cell division protein. May link together the upstream cell division proteins, which are predominantly cytoplasmic, with the downstream cell division proteins, which are predominantly periplasmic. The polypeptide is Cell division protein FtsB (Cronobacter sakazakii (strain ATCC BAA-894) (Enterobacter sakazakii)).